The sequence spans 64 residues: Alpha-mammal toxin Lqq5 (64 aa).

In terms of domain architecture, LCN-type CS-alpha/beta spans 2-64; the sequence is KDGYIVDDKN…VSIKEKGRCN (63 aa). 4 disulfide bridges follow: C12-C63, C16-C36, C22-C46, and C26-C48. N64 carries the asparagine amide modification.

This sequence belongs to the long (4 C-C) scorpion toxin superfamily. Sodium channel inhibitor family. Alpha subfamily. As to expression, expressed by the venom gland.

Its subcellular location is the secreted. Its function is as follows. Alpha toxins bind voltage-independently at site-3 of sodium channels (Nav) and inhibit the inactivation of the activated channels, thereby blocking neuronal transmission. Is active on mammals and bind with high affinity to rat brain synaptosome. Does not display phospholipid-binding activity. The chain is Alpha-mammal toxin Lqq5 from Leiurus quinquestriatus quinquestriatus (Egyptian scorpion).